A 642-amino-acid polypeptide reads, in one-letter code: Pentatricopeptide repeat-containing protein At3g16010 (642 aa).

PPR repeat units lie at residues Asp-125–Ser-159, Ser-161–Pro-195, Thr-196–Phe-230, Asp-232–Pro-266, Thr-267–Pro-301, Thr-302–Pro-336, Asp-337–Pro-371, Thr-372–Pro-407, Ser-408–Pro-442, Cys-443–Asn-473, Ser-478–Pro-512, Asp-513–Ala-547, Asp-548–Pro-582, and Asp-583–Tyr-617.

The protein belongs to the PPR family. P subfamily.

The protein is Pentatricopeptide repeat-containing protein At3g16010 of Arabidopsis thaliana (Mouse-ear cress).